The sequence spans 247 residues: UDP-2,3-diacylglucosamine hydrolase (247 aa).

5 residues coordinate Mn(2+): aspartate 8, histidine 10, aspartate 41, asparagine 79, and histidine 114. Residue 79–80 (NR) participates in substrate binding. Residues aspartate 122, serine 160, aspartate 171, arginine 174, and histidine 202 each coordinate substrate. Mn(2+) contacts are provided by histidine 202 and histidine 204.

It belongs to the LpxH family. Mn(2+) serves as cofactor.

The protein localises to the cell inner membrane. The catalysed reaction is UDP-2-N,3-O-bis[(3R)-3-hydroxytetradecanoyl]-alpha-D-glucosamine + H2O = 2-N,3-O-bis[(3R)-3-hydroxytetradecanoyl]-alpha-D-glucosaminyl 1-phosphate + UMP + 2 H(+). Its pathway is glycolipid biosynthesis; lipid IV(A) biosynthesis; lipid IV(A) from (3R)-3-hydroxytetradecanoyl-[acyl-carrier-protein] and UDP-N-acetyl-alpha-D-glucosamine: step 4/6. Hydrolyzes the pyrophosphate bond of UDP-2,3-diacylglucosamine to yield 2,3-diacylglucosamine 1-phosphate (lipid X) and UMP by catalyzing the attack of water at the alpha-P atom. Involved in the biosynthesis of lipid A, a phosphorylated glycolipid that anchors the lipopolysaccharide to the outer membrane of the cell. The chain is UDP-2,3-diacylglucosamine hydrolase from Xanthomonas axonopodis pv. citri (strain 306).